A 439-amino-acid chain; its full sequence is Microfibrillar-associated protein 1A (439 aa).

The segment at 1–200 (MSVPSALMKQ…SEDEMEPRLK (200 aa)) is disordered. N-acetylserine is present on serine 2. A compositionally biased stretch (basic and acidic residues) spans 23–34 (RNEKGEISMEKV). Residues serine 52 and serine 53 each carry the phosphoserine modification. A compositionally biased stretch (basic and acidic residues) spans 61-70 (QFIKKAKEQE). Lysine 67 participates in a covalent cross-link: Glycyl lysine isopeptide (Lys-Gly) (interchain with G-Cter in SUMO2). Acidic residues predominate over residues 71–81 (AEPEEQEEDSS). Residues serine 94, serine 116, serine 118, serine 132, and serine 133 each carry the phosphoserine modification. Composition is skewed to acidic residues over residues 112–122 (VVGESDSEVEG) and 131–144 (DSSEEEEEEIDDEE). Over residues 145–163 (IERRRGMMRQRAQERKNEE) the composition is skewed to basic and acidic residues. Residues 178-195 (ESESESEYEEYTDSEDEM) are compositionally biased toward acidic residues. A Glycyl lysine isopeptide (Lys-Gly) (interchain with G-Cter in SUMO2) cross-link involves residue lysine 249. A Phosphothreonine modification is found at threonine 267. Residue lysine 357 forms a Glycyl lysine isopeptide (Lys-Gly) (interchain with G-Cter in SUMO2) linkage. A Phosphoserine modification is found at serine 361. Glycyl lysine isopeptide (Lys-Gly) (interchain with G-Cter in SUMO2) cross-links involve residues lysine 371, lysine 381, lysine 415, and lysine 418. Residue serine 432 is modified to Phosphoserine.

Belongs to the MFAP1 family. As to quaternary structure, component of the spliceosome B complex. Interacts with PRPF38A (via N-terminal interaction domain).

Its subcellular location is the nucleus. Functionally, involved in pre-mRNA splicing as a component of the spliceosome. This chain is Microfibrillar-associated protein 1A, found in Mus musculus (Mouse).